We begin with the raw amino-acid sequence, 570 residues long: Dihydroxy-acid dehydratase (570 aa).

Cys61 is a [2Fe-2S] cluster binding site. Asp94 serves as a coordination point for Mg(2+). Cys135 is a binding site for [2Fe-2S] cluster. Mg(2+)-binding residues include Asp136 and Lys137. Lys137 carries the post-translational modification N6-carboxylysine. Cys207 is a binding site for [2Fe-2S] cluster. Glu459 serves as a coordination point for Mg(2+). Ser485 functions as the Proton acceptor in the catalytic mechanism.

The protein belongs to the IlvD/Edd family. Homodimer. The cofactor is [2Fe-2S] cluster. Requires Mg(2+) as cofactor.

The catalysed reaction is (2R)-2,3-dihydroxy-3-methylbutanoate = 3-methyl-2-oxobutanoate + H2O. It catalyses the reaction (2R,3R)-2,3-dihydroxy-3-methylpentanoate = (S)-3-methyl-2-oxopentanoate + H2O. The protein operates within amino-acid biosynthesis; L-isoleucine biosynthesis; L-isoleucine from 2-oxobutanoate: step 3/4. It participates in amino-acid biosynthesis; L-valine biosynthesis; L-valine from pyruvate: step 3/4. Functionally, functions in the biosynthesis of branched-chain amino acids. Catalyzes the dehydration of (2R,3R)-2,3-dihydroxy-3-methylpentanoate (2,3-dihydroxy-3-methylvalerate) into 2-oxo-3-methylpentanoate (2-oxo-3-methylvalerate) and of (2R)-2,3-dihydroxy-3-methylbutanoate (2,3-dihydroxyisovalerate) into 2-oxo-3-methylbutanoate (2-oxoisovalerate), the penultimate precursor to L-isoleucine and L-valine, respectively. The polypeptide is Dihydroxy-acid dehydratase (Lactococcus lactis subsp. cremoris (strain MG1363)).